We begin with the raw amino-acid sequence, 142 residues long: ATP synthase F(0) complex subunit C3, mitochondrial (142 aa).

A mitochondrion-targeting transit peptide spans 1-67 (MFACAKLACT…REFQTSAISR (67 aa)). Residues 83–103 (VGVAGSGAGIGTVFGSLIIGY) form a helical membrane-spanning segment. At Lys110 the chain carries N6,N6,N6-trimethyllysine. The helical transmembrane segment at 118–138 (ILGFALSEAMGLFCLMVAFLI) threads the bilayer.

It belongs to the ATPase C chain family. As to quaternary structure, F-type ATPases have 2 components, CF(1) - the catalytic core - and CF(0) - the membrane proton channel. CF(1) has five subunits: alpha(3), beta(3), gamma(1), delta(1), epsilon(1). CF(0) has three main subunits: a, b and c. Interacts with TMEM70 and TMEM242. Trimethylated by ATPSCKMT at Lys-110. Methylation is required for proper incorporation of the C subunit into the ATP synthase complex and mitochondrial respiration.

Its subcellular location is the mitochondrion membrane. Functionally, mitochondrial membrane ATP synthase (F(1)F(0) ATP synthase or Complex V) produces ATP from ADP in the presence of a proton gradient across the membrane which is generated by electron transport complexes of the respiratory chain. F-type ATPases consist of two structural domains, F(1) - containing the extramembraneous catalytic core and F(0) - containing the membrane proton channel, linked together by a central stalk and a peripheral stalk. During catalysis, ATP synthesis in the catalytic domain of F(1) is coupled via a rotary mechanism of the central stalk subunits to proton translocation. Part of the complex F(0) domain. A homomeric c-ring of probably 10 subunits is part of the complex rotary element. This is ATP synthase F(0) complex subunit C3, mitochondrial from Pongo abelii (Sumatran orangutan).